Here is a 466-residue protein sequence, read N- to C-terminus: Ribulose bisphosphate carboxylase large chain (466 aa).

Lys-5 bears the N6,N6,N6-trimethyllysine mark. The substrate site is built by Asn-114 and Thr-164. The active-site Proton acceptor is the Lys-166. Lys-168 serves as a coordination point for substrate. Mg(2+)-binding residues include Lys-192, Asp-194, and Glu-195. Lys-192 bears the N6-carboxylysine mark. His-285 functions as the Proton acceptor in the catalytic mechanism. Positions 286, 318, and 370 each coordinate substrate.

It belongs to the RuBisCO large chain family. Type I subfamily. Heterohexadecamer of 8 large chains and 8 small chains; disulfide-linked. The disulfide link is formed within the large subunit homodimers. Mg(2+) serves as cofactor. Post-translationally, the disulfide bond which can form in the large chain dimeric partners within the hexadecamer appears to be associated with oxidative stress and protein turnover.

It localises to the plastid. It is found in the chloroplast. It catalyses the reaction 2 (2R)-3-phosphoglycerate + 2 H(+) = D-ribulose 1,5-bisphosphate + CO2 + H2O. It carries out the reaction D-ribulose 1,5-bisphosphate + O2 = 2-phosphoglycolate + (2R)-3-phosphoglycerate + 2 H(+). In terms of biological role, ruBisCO catalyzes two reactions: the carboxylation of D-ribulose 1,5-bisphosphate, the primary event in carbon dioxide fixation, as well as the oxidative fragmentation of the pentose substrate in the photorespiration process. Both reactions occur simultaneously and in competition at the same active site. The chain is Ribulose bisphosphate carboxylase large chain from Drosera peltata (Pale sundew).